The chain runs to 56 residues: Ovomucoid (56 aa).

One can recognise a Kazal-like domain in the interval V6–C56. Cystine bridges form between C8–C38, C16–C35, and C24–C56. N-linked (GlcNAc...) asparagine glycosylation occurs at N45.

Its subcellular location is the secreted. This Bambusicola thoracicus (Chinese bamboo-partridge) protein is Ovomucoid.